Reading from the N-terminus, the 478-residue chain is Calcitonin receptor (478 aa).

The first 22 residues, 1–22 (MRFTFTRQFLAFFILISNPASI), serve as a signal peptide directing secretion. Over 23 to 146 (LPRSENLTFP…FTPEKLQNAY (124 aa)) the chain is Extracellular. N-linked (GlcNAc...) asparagine glycans are attached at residues Asn-28, Asn-73, Asn-125, and Asn-130. Intrachain disulfides connect Cys-55–Cys-81, Cys-72–Cys-112, and Cys-95–Cys-134. A helical membrane pass occupies residues 147 to 169 (VLYYLAIVGHSMSIITLVVSLGI). Over 170-181 (FVYFRSLGCQRV) the chain is Cytoplasmic. Residues 182–202 (TLHKNMFLTYILNSMIIIIHL) traverse the membrane as a helical segment. Residues 203 to 219 (VEVVPNGELVRKDPVSC) are Extracellular-facing. The cysteines at positions 219 and 289 are disulfide-linked. The chain crosses the membrane as a helical span at residues 220 to 242 (KILHFFHQYMMACNYFWMLCEGI). Residues 243–259 (YLHTLIVVSVFNEAKHL) are Cytoplasmic-facing. A helical transmembrane segment spans residues 260–280 (RWYYLLGWGFPLVPTTIHAIT). At 281–296 (RALYFNDNCWISVDTH) the chain is on the extracellular side. Residues 297–320 (LLYIIHGPVMVALVVNFFFLLNIV) traverse the membrane as a helical segment. Topologically, residues 321 to 340 (RVLVTKMRETHEAESYMYLK) are cytoplasmic. A helical transmembrane segment spans residues 341 to 359 (AVKATMILVPLLGIQFVVF). The Extracellular segment spans residues 360-367 (PWRPSNKV). Residues 368-394 (LGKIYDYFMHSLIHFQGFFVATIYCFC) form a helical membrane-spanning segment. The Cytoplasmic segment spans residues 395–478 (NNEVQTTLKR…LNIIEKESSA (84 aa)).

It belongs to the G-protein coupled receptor 2 family. Heterodimer of CALCR and RAMP1, RAMP2 or RAMP3; the receptor complexes function as AMYR1, AMYR2 and AMYR3 receptors, respectively, and respond to amylin/IAPP, calcitonin/CT and CGRP1 ligands. Interacts with GPRASP2.

The protein resides in the cell membrane. G protein-coupled receptor activated by ligand peptides amylin (IAPP), calcitonin (CT/CALCA) and calcitonin gene-related peptide type 1 (CGRP1/CALCA). CALCR interacts with receptor-activity-modifying proteins RAMP1, 2 and 3 to form receptor complexes AMYR1, 2 and 3, respectively. IAPP, CT and CGRP1 activate CALCR and AMYRs with distinct modes of receptor activation resulting in specific phenotypes. Ligand binding causes a conformation change that triggers signaling via guanine nucleotide-binding proteins (G proteins) and modulates the activity of downstream effectors. Activates cAMP-dependent pathway. This is Calcitonin receptor from Cavia porcellus (Guinea pig).